A 625-amino-acid polypeptide reads, in one-letter code: Coagulation factor XI (625 aa).

The N-terminal stretch at 1 to 18 (MIFLYQVVHFILFTSVSG) is a signal peptide. 4 consecutive Apple domains span residues 20-103 (CVTQ…FKQC), 110-193 (CNKD…LKSC), 200-283 (CIRD…LQSC), and 291-374 (CHSS…LRLC). Intrachain disulfides connect cysteine 20–cysteine 103, cysteine 46–cysteine 76, cysteine 50–cysteine 56, cysteine 110–cysteine 193, cysteine 136–cysteine 165, cysteine 140–cysteine 146, cysteine 200–cysteine 283, cysteine 226–cysteine 255, cysteine 230–cysteine 236, cysteine 291–cysteine 374, cysteine 317–cysteine 346, cysteine 321–cysteine 327, cysteine 380–cysteine 500, cysteine 416–cysteine 432, cysteine 514–cysteine 581, cysteine 545–cysteine 560, and cysteine 571–cysteine 599. Residues asparagine 90 and asparagine 126 are each glycosylated (N-linked (GlcNAc...) (complex) asparagine). A glycan (N-linked (GlcNAc...) (complex) asparagine; atypical) is linked at asparagine 163. The Peptidase S1 domain maps to 388–623 (IVGGTASVRG…YVDWILEKTQ (236 aa)). The active-site Charge relay system is histidine 431. Asparagine 450 carries an N-linked (GlcNAc...) (complex) asparagine glycan. Aspartate 480 acts as the Charge relay system in catalysis. Asparagine 491 carries an N-linked (GlcNAc...) (complex) asparagine glycan. 547–550 (KRYR) provides a ligand contact to heparin. The active-site Charge relay system is the serine 575.

The protein belongs to the peptidase S1 family. Plasma kallikrein subfamily. As to quaternary structure, homodimer; disulfide-linked. Can form non-covalently bonded homodimers. After activation the heavy and light chains are also linked by a disulfide bond. Interacts (activated) with F9 (inactive and activated) in calcium-dependent manner. Forms a heterodimer with SERPINA5. Interacts with Anopheles gambiae D7L2. Interacts (activated) with guianensin, an anticoagulant protein from Simulium guianense saliva. In terms of processing, N-glycosylated on both chains. N-glycosylated sites mainly consist of nonfucosylated sialylated biantennary (in high abundance) and/or triantennary (in low abundance) complex structures. Glycosylation at Asn-163 uses a rare non-canonical Asn-X-Cys glycosite. Post-translationally, activated by factor XIIa (or XII), which cleaves each polypeptide after Arg-387 into the light chain, which contains the active site, and the heavy chain, which associates with high molecular weight (HMW) kininogen. Activated by F12 (activated); the presence of negatively charged surfaces accelerates activation. Activated by F2 (thrombin); the presence of negatively charged surfaces, such as polyphosphate and dextran sulfate, strongly accelerates activation. Autoactivated; the presence of negatively charged surfaces, such as polyphosphate and dextran sulfate, accelerates autoactivation and autolysis. Isoform 2 is produced by platelets and megakaryocytes but absent from other blood cells.

It is found in the secreted. It carries out the reaction Selective cleavage of Arg-|-Ala and Arg-|-Val bonds in factor IX to form factor IXa.. With respect to regulation, inhibited by SERPINA5. In terms of biological role, factor XI triggers the middle phase of the intrinsic pathway of blood coagulation by activating factor IX. This chain is Coagulation factor XI (F11), found in Homo sapiens (Human).